We begin with the raw amino-acid sequence, 227 residues long: D-lyxose/D-mannose isomerase (227 aa).

D-fructose is bound by residues Lys90, 103–110, His171, Glu186, and Asp193; that span reads HFHWRKRE. Mn(2+) contacts are provided by His103, His105, Glu110, and His171.

It belongs to the D-lyxose ketol-isomerase family. As to quaternary structure, homodimer; disulfide-linked. Dimerization is facilitated through a disulfide bond between the two monomers of the dimeric enzyme. It depends on Mn(2+) as a cofactor.

The enzyme catalyses D-lyxose = D-xylulose. It catalyses the reaction D-mannose = D-fructose. Its function is as follows. Sugar isomerase that catalyzes the reversible isomerization of D-lyxose to D-xylulose, and D-mannose to D-fructose. Shows similar activity toward D-lyxose and D-mannose with a turnover and catalytic efficiency for D-lyxose as a substrate only 1.1- and 1.3-fold higher than those for D-mannose, respectively. Shows weaker activity with L-gulose, D-talose, L-ribose and L-allose. Overexpression enables cell growth on the rare pentose D-lyxose as the sole carbon source. The chain is D-lyxose/D-mannose isomerase from Escherichia coli O157:H7.